The primary structure comprises 465 residues: Alpha-galacturonidase (465 aa).

NAD(+) is bound at residue 11 to 78; it reads ITIAYIGGGS…GKWLYKACET (68 aa). Asn157 is a substrate binding site. Cys179 is a binding site for Mn(2+). Catalysis depends on His180, which acts as the Proton donor. His216 contacts Mn(2+).

Belongs to the glycosyl hydrolase 4 family. In terms of assembly, homotetramer. The cofactor is NAD(+). It depends on Mn(2+) as a cofactor.

The catalysed reaction is [(1-&gt;4)-alpha-D-galacturonosyl](n) + H2O = alpha-D-galacturonate + [(1-&gt;4)-alpha-D-galacturonosyl](n-1). Alpha-galacturonidase able to catalyze the hydrolysis of the chromogenic substrate p-nitrophenyl-alpha-D-galacturonic acid (pNPalphaGalUA). It is probable that alpha-1,4-di-galacturonate (GalUA(2)) is the naturally occurring substrate. The polypeptide is Alpha-galacturonidase (Thermoanaerobacterium saccharolyticum (strain DSM 8691 / JW/SL-YS485)).